The following is a 360-amino-acid chain: UDP-N-acetylglucosamine--N-acetylmuramyl-(pentapeptide) pyrophosphoryl-undecaprenol N-acetylglucosamine transferase (360 aa).

Residues 14–16 (TGG), Asn-131, Arg-167, Ser-195, Ile-249, and Gln-294 each bind UDP-N-acetyl-alpha-D-glucosamine.

Belongs to the glycosyltransferase 28 family. MurG subfamily.

It is found in the cell inner membrane. The enzyme catalyses di-trans,octa-cis-undecaprenyl diphospho-N-acetyl-alpha-D-muramoyl-L-alanyl-D-glutamyl-meso-2,6-diaminopimeloyl-D-alanyl-D-alanine + UDP-N-acetyl-alpha-D-glucosamine = di-trans,octa-cis-undecaprenyl diphospho-[N-acetyl-alpha-D-glucosaminyl-(1-&gt;4)]-N-acetyl-alpha-D-muramoyl-L-alanyl-D-glutamyl-meso-2,6-diaminopimeloyl-D-alanyl-D-alanine + UDP + H(+). The protein operates within cell wall biogenesis; peptidoglycan biosynthesis. Functionally, cell wall formation. Catalyzes the transfer of a GlcNAc subunit on undecaprenyl-pyrophosphoryl-MurNAc-pentapeptide (lipid intermediate I) to form undecaprenyl-pyrophosphoryl-MurNAc-(pentapeptide)GlcNAc (lipid intermediate II). The sequence is that of UDP-N-acetylglucosamine--N-acetylmuramyl-(pentapeptide) pyrophosphoryl-undecaprenol N-acetylglucosamine transferase from Polaromonas naphthalenivorans (strain CJ2).